Here is a 123-residue protein sequence, read N- to C-terminus: Galectin-2 (123 aa).

The 120-residue stretch at 4 to 123 folds into the Galectin domain; the sequence is KVEIMNMDMK…LRYLSVQGGF (120 aa). A beta-D-galactoside is bound at residue 65-71; sequence WGKEQRD.

Homodimer.

This protein binds beta-galactoside. Its physiological function is not yet known. The protein is Galectin-2 (LGALS2) of Sus scrofa (Pig).